Reading from the N-terminus, the 1092-residue chain is Neural cell adhesion molecule 1-B (1092 aa).

Positions 1–19 (MLHIKDLIWTLYFIGAAVA) are cleaved as a signal peptide. Ig-like C2-type domains lie at 20–108 (LEVN…GTVN), 113–202 (QKLT…KDIQ), 208–295 (PPLI…EAIV), 303–397 (PKMT…FEVQ), and 400–489 (PKIR…FILV). Residues 20–705 (LEVNIVPDQG…ATSASTGLGT (686 aa)) are Extracellular-facing. Disulfide bonds link cysteine 41/cysteine 93 and cysteine 136/cysteine 186. N-linked (GlcNAc...) asparagine glycosylation occurs at asparagine 82. Heparin contacts are provided by residues 149–153 (RHKGK) and 158–162 (KKDVR). N-linked (GlcNAc...) asparagine glycosylation occurs at asparagine 219. Residues cysteine 232 and cysteine 282 are joined by a disulfide bond. 5 N-linked (GlcNAc...) asparagine glycosylation sites follow: asparagine 310, asparagine 341, asparagine 417, asparagine 443, and asparagine 472. Cysteine 323 and cysteine 379 form a disulfide bridge. Cysteines 420 and 473 form a disulfide. Fibronectin type-III domains lie at 493 to 592 (TPSS…TQPV) and 595 to 691 (EPSA…TAKP). Residues 706–723 (GAIVGILIVTFVLLLVVV) form a helical membrane-spanning segment. Residues 724–1092 (DVTCFFLNKC…TQRNVNESKA (369 aa)) are Cytoplasmic-facing. Residues 754–784 (KDIEEGKAAFSKDESKEPIVEVRTEEERTPN) show a composition bias toward basic and acidic residues. Disordered stretches follow at residues 754–1005 (KDIE…GGTF) and 1024–1092 (TPAA…ESKA). Composition is skewed to low complexity over residues 820–832 (TTVT…ITET) and 839–851 (SPTS…TSST). The span at 860–871 (DSNTVQSVQATP) shows a compositional bias: polar residues. Over residues 917 to 929 (PSAATSAAEPPTA) the composition is skewed to low complexity. The segment covering 968–978 (AQPSTVKSPTE) has biased composition (polar residues). Basic and acidic residues predominate over residues 1050 to 1068 (AKTEKTQVEENSKPEETDV). The segment covering 1080–1092 (NEATQRNVNESKA) has biased composition (polar residues).

Polysialylated by ST8SIA2 and ST8SIA4. Polysialylation modulates cell interactions by confering both attractive and repulsive properties that are highly regulated by ST8SIA2 and ST8SIA4. Polysialylation is formed on a-2,3-linked sialic acid of core glycans.

The protein resides in the cell membrane. Its function is as follows. This protein is a cell adhesion molecule involved in neuron-neuron adhesion, neurite fasciculation, outgrowth of neurites, etc. This Xenopus laevis (African clawed frog) protein is Neural cell adhesion molecule 1-B.